The following is a 234-amino-acid chain: Sugar fermentation stimulation protein homolog (234 aa).

The protein belongs to the SfsA family.

The polypeptide is Sugar fermentation stimulation protein homolog (Pectobacterium atrosepticum (strain SCRI 1043 / ATCC BAA-672) (Erwinia carotovora subsp. atroseptica)).